Here is a 153-residue protein sequence, read N- to C-terminus: Actin-related protein 2/3 complex subunit 5-like protein (153 aa).

Position 64 is a phosphoserine (S64).

This sequence belongs to the ARPC5 family. May be a component of the Arp2/3 complex in which it may replace ARPC5.

The protein localises to the cytoplasm. The protein resides in the cytoskeleton. Functionally, may function as component of the Arp2/3 complex which is involved in regulation of actin polymerization and together with an activating nucleation-promoting factor (NPF) mediates the formation of branched actin networks. This chain is Actin-related protein 2/3 complex subunit 5-like protein (Arpc5l), found in Mus musculus (Mouse).